The following is a 965-amino-acid chain: PWWP domain-containing protein 4 (965 aa).

One can recognise a PWWP domain in the interval 135–196; that stretch reads VGDMVWGKVK…PAELIPFEPH (62 aa). Polar residues predominate over residues 437–455; that stretch reads MNFTSSSGNIPGKKSSVSK. Disordered stretches follow at residues 437–507, 526–577, 649–708, and 905–927; these read MNFT…KSSL, VVKR…KSSQ, SAKT…SLAP, and LSSQ…PPLD. Basic and acidic residues-rich tracts occupy residues 456–474 and 481–495; these read LSRD…RMGE and DQEK…KQDE. The segment covering 496–507 has biased composition (polar residues); the sequence is TGTNSRSNKSSL. The Nuclear localization signal signature appears at 546–553; the sequence is KKKEYVSE. Positions 549-563 are enriched in basic and acidic residues; that stretch reads EYVSELNRDTPDKRK. The segment covering 657 to 676 has biased composition (polar residues); it reads NEQSKAGRNRISSDSQQDVP. Positions 691–702 are enriched in basic and acidic residues; it reads ASDKKTNQDATK. Over residues 905-919 the composition is skewed to polar residues; it reads LSSQDSEPKPVNNQV.

The protein belongs to the PDP family. As to quaternary structure, component of the PRC2 (polycomb repressive complex 2) complex which regulates histone methylation on histone H3K27.

The protein localises to the nucleus. In terms of biological role, may influence gene expression by regulating the function of the PRC2 complex and modulating H3K27me3 level. The protein is PWWP domain-containing protein 4 of Arabidopsis thaliana (Mouse-ear cress).